Reading from the N-terminus, the 284-residue chain is RNase adapter protein RapZ (284 aa).

Position 8-15 (8-15 (GRSGSGKS)) interacts with ATP. Position 56–59 (56–59 (DVRN)) interacts with GTP. An RNA-binding region spans residues 266-284 (RSRGKNVQSRHRTLEKRKT).

Belongs to the RapZ-like family. RapZ subfamily. As to quaternary structure, homotrimer.

Modulates the synthesis of GlmS, by affecting the processing and stability of the regulatory small RNA GlmZ. When glucosamine-6-phosphate (GlcN6P) concentrations are high in the cell, RapZ binds GlmZ and targets it to cleavage by RNase E. Consequently, GlmZ is inactivated and unable to activate GlmS synthesis. Under low GlcN6P concentrations, RapZ is sequestered and inactivated by an other regulatory small RNA, GlmY, preventing GlmZ degradation and leading to synthesis of GlmS. This chain is RNase adapter protein RapZ, found in Salmonella typhi.